The sequence spans 135 residues: Large ribosomal subunit protein uL16c (135 aa).

It belongs to the universal ribosomal protein uL16 family. Part of the 50S ribosomal subunit.

Its subcellular location is the plastid. The protein localises to the chloroplast. The chain is Large ribosomal subunit protein uL16c from Euglena gracilis.